Consider the following 122-residue polypeptide: Small ribosomal subunit protein uS13 (122 aa).

A disordered region spans residues 99–122 (RGQRTHTNARTRKGPAKAIAGKKK).

The protein belongs to the universal ribosomal protein uS13 family. Part of the 30S ribosomal subunit. Forms a loose heterodimer with protein S19. Forms two bridges to the 50S subunit in the 70S ribosome.

Located at the top of the head of the 30S subunit, it contacts several helices of the 16S rRNA. In the 70S ribosome it contacts the 23S rRNA (bridge B1a) and protein L5 of the 50S subunit (bridge B1b), connecting the 2 subunits; these bridges are implicated in subunit movement. Contacts the tRNAs in the A and P-sites. The sequence is that of Small ribosomal subunit protein uS13 from Agrobacterium fabrum (strain C58 / ATCC 33970) (Agrobacterium tumefaciens (strain C58)).